A 414-amino-acid polypeptide reads, in one-letter code: Acetate kinase (414 aa).

N7 contacts Mg(2+). K14 contacts ATP. Position 99 (R99) interacts with substrate. D157 (proton donor/acceptor) is an active-site residue. ATP is bound by residues 217–221 (HLGNG) and 341–345 (GIGEN). E395 is a binding site for Mg(2+).

The protein belongs to the acetokinase family. Homodimer. Mg(2+) serves as cofactor. Requires Mn(2+) as cofactor.

The protein localises to the cytoplasm. The catalysed reaction is acetate + ATP = acetyl phosphate + ADP. It participates in metabolic intermediate biosynthesis; acetyl-CoA biosynthesis; acetyl-CoA from acetate: step 1/2. Functionally, catalyzes the formation of acetyl phosphate from acetate and ATP. Can also catalyze the reverse reaction. The chain is Acetate kinase from Solibacter usitatus (strain Ellin6076).